The following is a 144-amino-acid chain: Large ribosomal subunit protein uL15 (144 aa).

A disordered region spans residues 1-53 (MRLNTLSPAVGAKSAPKRVGRGIGSGLGKTAGRGHKGQKSRSGGGVRPGFEGG). 2 stretches are compositionally biased toward gly residues: residues 21–31 (RGIGSGLGKTA) and 42–52 (SGGGVRPGFEG).

This sequence belongs to the universal ribosomal protein uL15 family. Part of the 50S ribosomal subunit.

In terms of biological role, binds to the 23S rRNA. This chain is Large ribosomal subunit protein uL15, found in Shewanella amazonensis (strain ATCC BAA-1098 / SB2B).